We begin with the raw amino-acid sequence, 388 residues long: Probable peptidoglycan glycosyltransferase FtsW (388 aa).

Transmembrane regions (helical) follow at residues 16 to 36, 54 to 74, 82 to 102, 109 to 129, 144 to 164, 167 to 187, 189 to 209, 233 to 253, 277 to 297, 310 to 330, and 342 to 362; these read LVLI…SSSV, VFAL…PSQS, WFLL…EIGG, LVVM…LFLA, TAVI…LLQP, GTTV…GAPF, YFVI…INSP, SQAL…GASV, WLGV…MFAV, ALVV…NVGV, and LPFV…IGLV.

It belongs to the SEDS family. FtsW subfamily.

The protein resides in the cell inner membrane. It catalyses the reaction [GlcNAc-(1-&gt;4)-Mur2Ac(oyl-L-Ala-gamma-D-Glu-L-Lys-D-Ala-D-Ala)](n)-di-trans,octa-cis-undecaprenyl diphosphate + beta-D-GlcNAc-(1-&gt;4)-Mur2Ac(oyl-L-Ala-gamma-D-Glu-L-Lys-D-Ala-D-Ala)-di-trans,octa-cis-undecaprenyl diphosphate = [GlcNAc-(1-&gt;4)-Mur2Ac(oyl-L-Ala-gamma-D-Glu-L-Lys-D-Ala-D-Ala)](n+1)-di-trans,octa-cis-undecaprenyl diphosphate + di-trans,octa-cis-undecaprenyl diphosphate + H(+). The protein operates within cell wall biogenesis; peptidoglycan biosynthesis. Its function is as follows. Peptidoglycan polymerase that is essential for cell division. The polypeptide is Probable peptidoglycan glycosyltransferase FtsW (Thiomicrospira cyclica (strain DSM 14477 / JCM 11371 / ALM1) (Thioalkalimicrobium cyclicum)).